The following is a 331-amino-acid chain: Ketol-acid reductoisomerase (NADP(+)) (331 aa).

In terms of domain architecture, KARI N-terminal Rossmann spans 4–183 (ATIYYDDDAE…GCTRAGVVET (180 aa)). Residues 27–30 (YGSQ), arginine 50, serine 53, serine 55, and 85–88 (DTVQ) contribute to the NADP(+) site. Histidine 109 is a catalytic residue. Glycine 135 serves as a coordination point for NADP(+). One can recognise a KARI C-terminal knotted domain in the interval 184-329 (TFREETETDL…EDLRALFAWG (146 aa)). Mg(2+) contacts are provided by aspartate 192, glutamate 196, glutamate 228, and glutamate 232. Serine 253 contributes to the substrate binding site.

It belongs to the ketol-acid reductoisomerase family. The cofactor is Mg(2+).

It carries out the reaction (2R)-2,3-dihydroxy-3-methylbutanoate + NADP(+) = (2S)-2-acetolactate + NADPH + H(+). The catalysed reaction is (2R,3R)-2,3-dihydroxy-3-methylpentanoate + NADP(+) = (S)-2-ethyl-2-hydroxy-3-oxobutanoate + NADPH + H(+). The protein operates within amino-acid biosynthesis; L-isoleucine biosynthesis; L-isoleucine from 2-oxobutanoate: step 2/4. It participates in amino-acid biosynthesis; L-valine biosynthesis; L-valine from pyruvate: step 2/4. Its function is as follows. Involved in the biosynthesis of branched-chain amino acids (BCAA). Catalyzes an alkyl-migration followed by a ketol-acid reduction of (S)-2-acetolactate (S2AL) to yield (R)-2,3-dihydroxy-isovalerate. In the isomerase reaction, S2AL is rearranged via a Mg-dependent methyl migration to produce 3-hydroxy-3-methyl-2-ketobutyrate (HMKB). In the reductase reaction, this 2-ketoacid undergoes a metal-dependent reduction by NADPH to yield (R)-2,3-dihydroxy-isovalerate. The protein is Ketol-acid reductoisomerase (NADP(+)) of Natronomonas pharaonis (strain ATCC 35678 / DSM 2160 / CIP 103997 / JCM 8858 / NBRC 14720 / NCIMB 2260 / Gabara) (Halobacterium pharaonis).